A 56-amino-acid chain; its full sequence is Attractin (56 aa).

Intrachain disulfides connect Cys-4–Cys-41, Cys-13–Cys-33, and Cys-20–Cys-26.

In terms of tissue distribution, produced by the albumen gland of the egg cordons.

The protein resides in the secreted. Functionally, water-borne pheromone that attract the marine mollusk Aplysia into breeding aggregations and coordinate male and female reproductive behavior within the aggregation. The polypeptide is Attractin (ATT) (Aplysia vaccaria (California black sea hare)).